A 98-amino-acid polypeptide reads, in one-letter code: Large ribosomal subunit protein uL23 (98 aa).

Belongs to the universal ribosomal protein uL23 family. In terms of assembly, part of the 50S ribosomal subunit. Contacts protein L29, and trigger factor when it is bound to the ribosome.

One of the early assembly proteins it binds 23S rRNA. One of the proteins that surrounds the polypeptide exit tunnel on the outside of the ribosome. Forms the main docking site for trigger factor binding to the ribosome. The protein is Large ribosomal subunit protein uL23 of Frankia alni (strain DSM 45986 / CECT 9034 / ACN14a).